A 101-amino-acid polypeptide reads, in one-letter code: Small ribosomal subunit protein uS10 (101 aa).

This sequence belongs to the universal ribosomal protein uS10 family. In terms of assembly, part of the 30S ribosomal subunit.

In terms of biological role, involved in the binding of tRNA to the ribosomes. In Mycobacterium ulcerans (strain Agy99), this protein is Small ribosomal subunit protein uS10.